The following is a 232-amino-acid chain: Ubiquinone biosynthesis O-methyltransferase (232 aa).

The S-adenosyl-L-methionine site is built by Arg36, Gly55, Asp76, and Met120.

The protein belongs to the methyltransferase superfamily. UbiG/COQ3 family.

It catalyses the reaction a 3-demethylubiquinol + S-adenosyl-L-methionine = a ubiquinol + S-adenosyl-L-homocysteine + H(+). It carries out the reaction a 3-(all-trans-polyprenyl)benzene-1,2-diol + S-adenosyl-L-methionine = a 2-methoxy-6-(all-trans-polyprenyl)phenol + S-adenosyl-L-homocysteine + H(+). The protein operates within cofactor biosynthesis; ubiquinone biosynthesis. O-methyltransferase that catalyzes the 2 O-methylation steps in the ubiquinone biosynthetic pathway. This is Ubiquinone biosynthesis O-methyltransferase from Burkholderia cenocepacia (strain ATCC BAA-245 / DSM 16553 / LMG 16656 / NCTC 13227 / J2315 / CF5610) (Burkholderia cepacia (strain J2315)).